Here is a 504-residue protein sequence, read N- to C-terminus: Cytochrome P450 3A41 (504 aa).

Cysteine 443 is a heme binding site.

Belongs to the cytochrome P450 family. It depends on heme as a cofactor. In terms of tissue distribution, expressed in liver. Also expressed in the kidneys of female mice, with traces in the stomach, ovary, and heart of female mice and in the testis of male mice.

It localises to the endoplasmic reticulum membrane. Its subcellular location is the microsome membrane. The enzyme catalyses an organic molecule + reduced [NADPH--hemoprotein reductase] + O2 = an alcohol + oxidized [NADPH--hemoprotein reductase] + H2O + H(+). This chain is Cytochrome P450 3A41 (Cyp3a41a), found in Mus musculus (Mouse).